The following is a 223-amino-acid chain: Deoxyribose-phosphate aldolase (223 aa).

The active-site Proton donor/acceptor is Asp-91. The Schiff-base intermediate with acetaldehyde role is filled by Lys-153. Lys-182 acts as the Proton donor/acceptor in catalysis.

It belongs to the DeoC/FbaB aldolase family. DeoC type 1 subfamily.

It localises to the cytoplasm. The catalysed reaction is 2-deoxy-D-ribose 5-phosphate = D-glyceraldehyde 3-phosphate + acetaldehyde. It participates in carbohydrate degradation; 2-deoxy-D-ribose 1-phosphate degradation; D-glyceraldehyde 3-phosphate and acetaldehyde from 2-deoxy-alpha-D-ribose 1-phosphate: step 2/2. In terms of biological role, catalyzes a reversible aldol reaction between acetaldehyde and D-glyceraldehyde 3-phosphate to generate 2-deoxy-D-ribose 5-phosphate. The protein is Deoxyribose-phosphate aldolase of Streptococcus pyogenes serotype M28 (strain MGAS6180).